The sequence spans 87 residues: Small ribosomal subunit protein bS20 (87 aa).

Residues 1–20 (MANIKSQIKRNKTNEKARLR) are disordered.

It belongs to the bacterial ribosomal protein bS20 family.

Its function is as follows. Binds directly to 16S ribosomal RNA. The protein is Small ribosomal subunit protein bS20 of Corynebacterium efficiens (strain DSM 44549 / YS-314 / AJ 12310 / JCM 11189 / NBRC 100395).